The primary structure comprises 130 residues: Small ribosomal subunit protein uS11 (130 aa).

It belongs to the universal ribosomal protein uS11 family. In terms of assembly, part of the 30S ribosomal subunit. Interacts with proteins S7 and S18. Binds to IF-3.

In terms of biological role, located on the platform of the 30S subunit, it bridges several disparate RNA helices of the 16S rRNA. Forms part of the Shine-Dalgarno cleft in the 70S ribosome. The chain is Small ribosomal subunit protein uS11 from Nitrobacter hamburgensis (strain DSM 10229 / NCIMB 13809 / X14).